The primary structure comprises 92 residues: Probable Fe(2+)-trafficking protein (92 aa).

Belongs to the Fe(2+)-trafficking protein family.

Functionally, could be a mediator in iron transactions between iron acquisition and iron-requiring processes, such as synthesis and/or repair of Fe-S clusters in biosynthetic enzymes. The chain is Probable Fe(2+)-trafficking protein from Anaeromyxobacter sp. (strain Fw109-5).